A 466-amino-acid chain; its full sequence is 3-isopropylmalate dehydratase large subunit (466 aa).

Positions 347, 407, and 410 each coordinate [4Fe-4S] cluster.

Belongs to the aconitase/IPM isomerase family. LeuC type 1 subfamily. Heterodimer of LeuC and LeuD. [4Fe-4S] cluster serves as cofactor.

The enzyme catalyses (2R,3S)-3-isopropylmalate = (2S)-2-isopropylmalate. Its pathway is amino-acid biosynthesis; L-leucine biosynthesis; L-leucine from 3-methyl-2-oxobutanoate: step 2/4. Catalyzes the isomerization between 2-isopropylmalate and 3-isopropylmalate, via the formation of 2-isopropylmaleate. The chain is 3-isopropylmalate dehydratase large subunit from Vibrio vulnificus (strain CMCP6).